An 880-amino-acid chain; its full sequence is MAKKRIYEVAKELDIENKIVVKKAQDLGFDVKSHMSSLDDKQVSKLVDSLKSTNTTPSTEKDSKNSSRKEKAKIKVSVGAIRRRDNKNEHDNRHGNNKHRNNNFKKQQNNRRENEDKKTTSAKPAARDLLNKFKKKQRAEASELNAQTEASRRKWHQEQNPQRSKVKKVENTRKPKEEKLEGAAAVKARVQASQKPVGPKIIKPSPARNKAKRPTVKKVEPIAPVVPAPQKEETKPTRKKDFTRKKREVPDYERERSEHSDKARRRRNKKNKRINQSKEVKKQPTQRKERPLPETLVYEEGMNAQDLGKLLHREPAEIVKKLFMLGVMTNQNQSLDKDTIELLAAEYGIEAEEKVHEDISDIDTLYTKEMEESKASKHQEKRPPVVTIMGHVDHGKTTLLDRLRHTNVSEHEAGGITQRIGAYQVRIDDRLITFLDTPGHAAFSNMRARGAEITDIVILVVAADDGVMPQTIEAIDHAKSAGVPIIVAVNKIDKPGANPDHVMEQLMKYGLVPEDWGGDTIFVKISAKTGKNVEELLQMILLQADVMELKADPDQKAIGTVIEARLDKGRGSVADILVQQGTLKVGDPIVVGDTFGRVRVMTNDKGRRVKKATPSTPVEITGLNDVPEAADKLVVFDDEKTARSVGEQRAKNALEKQRENVQHVTLDNLFDTMKKENMKEVDIVLKADVQGSAEALQQSLEKIEVEGVRVNIIHSGVGAINESDVTLAGASNAFIVGFNVRPTNTAKSQADSEGVDIRLYNIIYKVMDDVEAAMKGMLEPTYEEKVTGNLTVRETWKVSKIGTIAGAFVDNGYVTRDSGIRVIRDGIVKYDGKVASLKRFKDDVKEVKQGFDCGITIENFNDIKVDDQLEAYEMQEVPVK.

Composition is skewed to basic and acidic residues over residues 34-43 (HMSSLDDKQV), 59-69 (TEKDSKNSSRK), 82-94 (RRRD…DNRH), 110-131 (NRRE…DLLN), 167-181 (KKVE…EKLE), 230-240 (QKEETKPTRKK), and 248-261 (EVPD…EHSD). The segment at 34–297 (HMSSLDDKQV…KERPLPETLV (264 aa)) is disordered. A compositionally biased stretch (basic residues) spans 262–275 (KARRRRNKKNKRIN). The segment covering 276–292 (QSKEVKKQPTQRKERPL) has biased composition (basic and acidic residues). Residues 381-550 (KRPPVVTIMG…LLQADVMELK (170 aa)) enclose the tr-type G domain. Residues 390-397 (GHVDHGKT) are G1. 390 to 397 (GHVDHGKT) is a GTP binding site. A G2 region spans residues 415-419 (GITQR). The G3 stretch occupies residues 436–439 (DTPG). Residues 436–440 (DTPGH) and 490–493 (NKID) contribute to the GTP site. The interval 490 to 493 (NKID) is G4. A G5 region spans residues 526 to 528 (SAK).

Belongs to the TRAFAC class translation factor GTPase superfamily. Classic translation factor GTPase family. IF-2 subfamily.

The protein resides in the cytoplasm. Functionally, one of the essential components for the initiation of protein synthesis. Protects formylmethionyl-tRNA from spontaneous hydrolysis and promotes its binding to the 30S ribosomal subunits. Also involved in the hydrolysis of GTP during the formation of the 70S ribosomal complex. The polypeptide is Translation initiation factor IF-2 (Lactobacillus johnsonii (strain CNCM I-12250 / La1 / NCC 533)).